Consider the following 96-residue polypeptide: MHMFYYSIYDRKARSYGDLISFPSGEKEAAIRWFRDVVMDSDSKNILHRYPEDFDFCYIGYFDKDKGRFYPVDAGIVTIINAGEFFLDSEYRQEEV.

This sequence belongs to the microviridae C protein family.

Its function is as follows. Plays a central role in the packaging of viral DNA into phage procapsid, which occurs in the late stage of infection. Can interact with the replicative complex after the completion of one round of DNA synthesis. When protein ORF5 is bound to the replicative form, the complex becomes accessible to procapsid and serves as a DNA packaging apparatus. This chain is Protein ORF5, found in Chlamydia phage 1 (Bacteriophage Chp1).